Consider the following 304-residue polypeptide: Acetyl-coenzyme A carboxylase carboxyl transferase subunit beta (304 aa).

A disordered region spans residues 16–42 (SSLPPKNSEGGLAYFDEPSPEQESTRK). In terms of domain architecture, CoA carboxyltransferase N-terminal spans 48-304 (LWVKCPKCGE…LLRYHQEGAV (257 aa)). Residues C52, C55, C71, and C74 each coordinate Zn(2+). A C4-type zinc finger spans residues 52–74 (CPKCGEALFNKDLVENQRVCLTC).

It belongs to the AccD/PCCB family. As to quaternary structure, acetyl-CoA carboxylase is a heterohexamer composed of biotin carboxyl carrier protein (AccB), biotin carboxylase (AccC) and two subunits each of ACCase subunit alpha (AccA) and ACCase subunit beta (AccD). Zn(2+) is required as a cofactor.

Its subcellular location is the cytoplasm. It carries out the reaction N(6)-carboxybiotinyl-L-lysyl-[protein] + acetyl-CoA = N(6)-biotinyl-L-lysyl-[protein] + malonyl-CoA. The protein operates within lipid metabolism; malonyl-CoA biosynthesis; malonyl-CoA from acetyl-CoA: step 1/1. Its function is as follows. Component of the acetyl coenzyme A carboxylase (ACC) complex. Biotin carboxylase (BC) catalyzes the carboxylation of biotin on its carrier protein (BCCP) and then the CO(2) group is transferred by the transcarboxylase to acetyl-CoA to form malonyl-CoA. This chain is Acetyl-coenzyme A carboxylase carboxyl transferase subunit beta, found in Desulfitobacterium hafniense (strain Y51).